We begin with the raw amino-acid sequence, 325 residues long: Protein ORANGE-GREEN, chloroplastic (325 aa).

A chloroplast-targeting transit peptide spans 1-54 (MDRVLVASYPINHLIRPHSFRIDYCWSTCFTSRLNSGKERQKLSSRWRWRSMAS). Residues 53 to 71 (ASDSTDSSSSSSFAPSVES) are compositionally biased toward low complexity. The disordered stretch occupies residues 53–77 (ASDSTDSSSSSSFAPSVESDPSDKT). 2 helical membrane passes run 164 to 184 (LYYVTCYSLIAGIILFGGLLA) and 217 to 237 (IVASFSGGAVGVISALMVVEV). Positions 226-317 (VGVISALMVV…CTGMAMASEH (92 aa)) are CR-type-like. One copy of the CXXCXGXG motif repeat lies at 248 to 255 (CKYCLGTG). Residues 259-266 (CARCSNTG) form a CXXCXXXG motif repeat. One copy of the CXXCXGXG motif repeat lies at 292–299 (CQNCSGSG). The stretch at 303 to 310 (CPTCLCTG) is one CXXCXXXG motif repeat.

Belongs to the orange-like family.

It localises to the plastid. The protein localises to the chloroplast membrane. In terms of biological role, involved in chloroplast differentiation in fruit flesh. This Cucumis melo (Muskmelon) protein is Protein ORANGE-GREEN, chloroplastic.